The sequence spans 739 residues: MSVSESAVFAYESSVHSTNVLLSLNDQRKKDVLCDVTVLVEGQRFRAHRSVLAACSSYFHSRIVGQTDAELTVTLPEEVTVKGFEPLIQFAYTAKLILSKDNVDEVCRCVEFLSVHNIEESCFQFLKFKFLDSTSEQQECARKKCFSSHCQKADFKFSFSEQKDLEIDEADEFLEKKRVQTPQCDSRRCQGSVKASPPLQDSVSQACQSLCTDKDGALALPSLCPKYRKFQKAFGTDKIRTLESGVRDVHTASVQPNETSELECFGGAQGCADLHVILKCEGMKAAMESEDTEGQDPSPQCPAEQPQGTPLPQDSAGPHGLYSLSALHTYEQSGDVAFAGVQSKTVKTEKPLSRPDAQDEKPSENQDLYLKSSMGPKEDSSSLASEDRSSVEREVAEHLAKGFWSDICSTDSPCQMQLSPTVAKDGPEQGYSQRRSECPWLGIRISESPEPGQRTFTTLSSVNCPFISTLSSEGCSSNLEIGNYDYVSEPQQEPCPYACVISLGDDSETDTEGDSESCSAREQDCEVKLPFNAQRIISLSRNDFQSLLKMHKLTPEQLDCIHDIRRRSKNRIAAQRCRKRKLDCIQNLESEIEKLQSEKESLLKERDHILSTLGETKQNLTGLCQQVCKEAALSPEQIQILAKYSASDCPLSFLISEKGKSTPDGELAFTSVFSVSDVPPTAPPPCGRGSSAASQELVQESPPTTAAAPEQATLLEPCRQSAGISDFCQQMSDKCTTDE.

Residues 34–100 (CDVTVLVEGQ…AYTAKLILSK (67 aa)) form the BTB domain. Ser196 is modified (phosphoserine). Disordered regions lie at residues 287-321 (MESEDTEGQDPSPQCPAEQPQGTPLPQDSAGPHGL) and 344-391 (KTVK…RSSV). Basic and acidic residues-rich tracts occupy residues 346–364 (VKTEKPLSRPDAQDEKPSE) and 376–391 (PKEDSSSLASEDRSSV). Residue Ser448 is modified to Phosphoserine. The 64-residue stretch at 560–623 (CIHDIRRRSK…GETKQNLTGL (64 aa)) folds into the bZIP domain. The interval 565-581 (RRRSKNRIAAQRCRKRK) is basic motif. The interval 585-592 (IQNLESEI) is leucine-zipper. The tract at residues 679 to 708 (PPTAPPPCGRGSSAASQELVQESPPTTAAA) is disordered. Low complexity predominate over residues 699–708 (QESPPTTAAA).

It belongs to the bZIP family. CNC subfamily. As to quaternary structure, heterodimer of BACH1 and MAFK. Ubiquitinated by the SCF(FBXL17) complex or by the by the SCF(FBXO22) complex, leading to its degradation by the proteasome. Under oxidative stress, reactive oxygen species covalently modify cysteine residues on the bZIP domain of BACH1 and release it from chromatin. If the BTB domain of BACH1 remains intact, its beta1-alpha6 degron is recognized by FBXO22, promoting its ubiquitination and degradation. If the structural integrity of the beta1-alpha6 degron is compromised, FBXL17 will transiently associate with the BACH1 BTB dimer and remodel it into stably bound monomer for ubiquitination and degradation. Ubiquitous.

The protein resides in the nucleus. Its function is as follows. Transcriptional regulator that acts as a repressor or activator, depending on the context. Binds to NF-E2 DNA binding sites. Plays important roles in coordinating transcription activation and repression by MAFK. Together with MAF, represses the transcription of genes under the control of the NFE2L2 oxidative stress pathway. The sequence is that of Transcription regulator protein BACH1 (Bach1) from Mus musculus (Mouse).